The following is a 104-amino-acid chain: Inclusion membrane protein F (104 aa).

A run of 2 helical transmembrane segments spans residues 39-59 (LVVA…SLVA) and 70-90 (LAVL…VLFI).

Its subcellular location is the secreted. It localises to the host vacuole. The protein resides in the host pathogen-containing vacuole. It is found in the host pathogen-containing vacuole membrane. In terms of biological role, inclusion membrane protein probably involved in early modification events of the chlamydial inclusion. The polypeptide is Inclusion membrane protein F (Chlamydia trachomatis serovar L2 (strain ATCC VR-902B / DSM 19102 / 434/Bu)).